The sequence spans 761 residues: Mitochondrial intermediate peptidase 1 (761 aa).

A Zn(2+)-binding site is contributed by His530. The active site involves Glu531. The Zn(2+) site is built by His534 and His537.

It belongs to the peptidase M3 family. It depends on Zn(2+) as a cofactor.

It is found in the mitochondrion matrix. It catalyses the reaction Release of an N-terminal octapeptide as second stage of processing of some proteins imported into the mitochondrion.. In terms of biological role, cleaves proteins, imported into the mitochondrion, to their mature size. While most mitochondrial precursor proteins are processed to the mature form in one step by mitochondrial processing peptidase (MPP), the sequential cleavage by MIP of an octapeptide after initial processing by MPP is a required step for a subgroup of nuclear-encoded precursor proteins destined for the matrix or the inner membrane. The sequence is that of Mitochondrial intermediate peptidase 1 (OCT1) from Cryptococcus neoformans var. neoformans serotype D (strain B-3501A) (Filobasidiella neoformans).